The chain runs to 131 residues: Large-conductance mechanosensitive channel (131 aa).

3 helical membrane-spanning segments follow: residues 8-28 (FAVRGNVIDLAVGVIIGGAFG), 30-50 (IVSSLVNDIIMPLVGLILGGI), and 67-87 (GAFLQTVVDFLVIAFSIFLFV).

This sequence belongs to the MscL family. As to quaternary structure, homopentamer.

It is found in the cell membrane. Its function is as follows. Channel that opens in response to stretch forces in the membrane lipid bilayer. May participate in the regulation of osmotic pressure changes within the cell. This is Large-conductance mechanosensitive channel from Anoxybacillus flavithermus (strain DSM 21510 / WK1).